The following is a 212-amino-acid chain: Thiamine-phosphate synthase (212 aa).

Residues 40-44 (QFREK) and Asn-75 contribute to the 4-amino-2-methyl-5-(diphosphooxymethyl)pyrimidine site. Residues Asp-76 and Asp-95 each coordinate Mg(2+). Ser-113 contributes to the 4-amino-2-methyl-5-(diphosphooxymethyl)pyrimidine binding site. 139–141 (TSS) contributes to the 2-[(2R,5Z)-2-carboxy-4-methylthiazol-5(2H)-ylidene]ethyl phosphate binding site. Lys-142 serves as a coordination point for 4-amino-2-methyl-5-(diphosphooxymethyl)pyrimidine. 2-[(2R,5Z)-2-carboxy-4-methylthiazol-5(2H)-ylidene]ethyl phosphate-binding positions include Gly-171 and 191–192 (IS).

It belongs to the thiamine-phosphate synthase family. Mg(2+) serves as cofactor.

It catalyses the reaction 2-[(2R,5Z)-2-carboxy-4-methylthiazol-5(2H)-ylidene]ethyl phosphate + 4-amino-2-methyl-5-(diphosphooxymethyl)pyrimidine + 2 H(+) = thiamine phosphate + CO2 + diphosphate. It carries out the reaction 2-(2-carboxy-4-methylthiazol-5-yl)ethyl phosphate + 4-amino-2-methyl-5-(diphosphooxymethyl)pyrimidine + 2 H(+) = thiamine phosphate + CO2 + diphosphate. The catalysed reaction is 4-methyl-5-(2-phosphooxyethyl)-thiazole + 4-amino-2-methyl-5-(diphosphooxymethyl)pyrimidine + H(+) = thiamine phosphate + diphosphate. It functions in the pathway cofactor biosynthesis; thiamine diphosphate biosynthesis; thiamine phosphate from 4-amino-2-methyl-5-diphosphomethylpyrimidine and 4-methyl-5-(2-phosphoethyl)-thiazole: step 1/1. Functionally, condenses 4-methyl-5-(beta-hydroxyethyl)thiazole monophosphate (THZ-P) and 2-methyl-4-amino-5-hydroxymethyl pyrimidine pyrophosphate (HMP-PP) to form thiamine monophosphate (TMP). The sequence is that of Thiamine-phosphate synthase from Staphylococcus epidermidis (strain ATCC 35984 / DSM 28319 / BCRC 17069 / CCUG 31568 / BM 3577 / RP62A).